The primary structure comprises 262 residues: Indole-3-glycerol phosphate synthase (262 aa).

Belongs to the TrpC family.

It catalyses the reaction 1-(2-carboxyphenylamino)-1-deoxy-D-ribulose 5-phosphate + H(+) = (1S,2R)-1-C-(indol-3-yl)glycerol 3-phosphate + CO2 + H2O. It participates in amino-acid biosynthesis; L-tryptophan biosynthesis; L-tryptophan from chorismate: step 4/5. This chain is Indole-3-glycerol phosphate synthase, found in Bordetella petrii (strain ATCC BAA-461 / DSM 12804 / CCUG 43448).